The following is a 194-amino-acid chain: Potassium-transporting ATPase KdpC subunit (194 aa).

A helical transmembrane segment spans residues 12–34; it reads LFLLLLTGGVYPLLTTALGQWWF.

It belongs to the KdpC family. The system is composed of three essential subunits: KdpA, KdpB and KdpC.

It localises to the cell inner membrane. Part of the high-affinity ATP-driven potassium transport (or Kdp) system, which catalyzes the hydrolysis of ATP coupled with the electrogenic transport of potassium into the cytoplasm. This subunit acts as a catalytic chaperone that increases the ATP-binding affinity of the ATP-hydrolyzing subunit KdpB by the formation of a transient KdpB/KdpC/ATP ternary complex. The sequence is that of Potassium-transporting ATPase KdpC subunit from Salmonella enteritidis PT4 (strain P125109).